We begin with the raw amino-acid sequence, 102 residues long: Small ribosomal subunit protein uS10 (102 aa).

Belongs to the universal ribosomal protein uS10 family. Part of the 30S ribosomal subunit.

Functionally, involved in the binding of tRNA to the ribosomes. This chain is Small ribosomal subunit protein uS10, found in Thermosipho melanesiensis (strain DSM 12029 / CIP 104789 / BI429).